Here is a 567-residue protein sequence, read N- to C-terminus: Membrane protein insertase YidC (567 aa).

The helical transmembrane segment at 3–23 (IQRIVLFAGLAIVSYLMVLAW) threads the bilayer. The interval 32-80 (TEQVAEAQSSSDSSATNSTDDMILPEDNNAGGEEFATPETGSLASTSAN) is disordered. Positions 40 to 52 (SSSDSSATNSTDD) are enriched in low complexity. The segment covering 70–80 (ETGSLASTSAN) has biased composition (polar residues). Helical transmembrane passes span 354-374 (FGWL…FYGL), 378-398 (WGVA…HLSA), 445-465 (GGCL…WVLF), 485-505 (MDPY…QMSL), and 522-542 (PLIF…YWLV).

This sequence belongs to the OXA1/ALB3/YidC family. Type 1 subfamily. As to quaternary structure, interacts with the Sec translocase complex via SecD. Specifically interacts with transmembrane segments of nascent integral membrane proteins during membrane integration.

The protein resides in the cell inner membrane. Its function is as follows. Required for the insertion and/or proper folding and/or complex formation of integral membrane proteins into the membrane. Involved in integration of membrane proteins that insert both dependently and independently of the Sec translocase complex, as well as at least some lipoproteins. Aids folding of multispanning membrane proteins. The protein is Membrane protein insertase YidC of Marinobacter nauticus (strain ATCC 700491 / DSM 11845 / VT8) (Marinobacter aquaeolei).